A 567-amino-acid polypeptide reads, in one-letter code: SRSF protein kinase 3 (567 aa).

The segment covering 1–16 (MSASTGGGGDSGGSGG) has biased composition (gly residues). The disordered stretch occupies residues 1-36 (MSASTGGGGDSGGSGGSSSSSQASCGPESSGSELAL). Residues 17–32 (SSSSSQASCGPESSGS) show a composition bias toward low complexity. S50 is subject to Phosphoserine. Positions 79–565 (YHVVRKLGWG…AADCLQHPWL (487 aa)) constitute a Protein kinase domain. Residues 85–93 (LGWGHFSTV) and K108 contribute to the ATP site. D212 functions as the Proton acceptor in the catalytic mechanism. Disordered stretches follow at residues 238–283 (QQAG…RLLE) and 298–351 (ATQA…SQTS). Positions 248-258 (SIVSTAPQEVL) are enriched in polar residues. The span at 264 to 279 (SKNKRKKMRRKRKQQK) shows a compositional bias: basic residues. The segment covering 327 to 348 (AGPSPASSSPAPGGGRSLSAGS) has biased composition (low complexity). Phosphoserine is present on S330.

Belongs to the protein kinase superfamily. CMGC Ser/Thr protein kinase family. In terms of tissue distribution, expressed in skeletal and heart muscle. Also expressed in the fetal brain.

The protein localises to the nucleus. The protein resides in the cytoplasm. The enzyme catalyses L-seryl-[protein] + ATP = O-phospho-L-seryl-[protein] + ADP + H(+). It catalyses the reaction L-threonyl-[protein] + ATP = O-phospho-L-threonyl-[protein] + ADP + H(+). Serine/arginine-rich protein-specific kinase which specifically phosphorylates its substrates at serine residues located in regions rich in arginine/serine dipeptides, known as RS domains. Phosphorylates the SR splicing factor SRSF1 and the lamin-B receptor (LBR) in vitro. Required for normal muscle development. In Homo sapiens (Human), this protein is SRSF protein kinase 3 (SRPK3).